The following is a 209-amino-acid chain: Thiamine-phosphate synthase (209 aa).

4-amino-2-methyl-5-(diphosphooxymethyl)pyrimidine contacts are provided by residues 41-45 and Asn73; that span reads QYRNK. Mg(2+) contacts are provided by Asp74 and Asp93. A 4-amino-2-methyl-5-(diphosphooxymethyl)pyrimidine-binding site is contributed by Ser112. 139–141 contributes to the 2-[(2R,5Z)-2-carboxy-4-methylthiazol-5(2H)-ylidene]ethyl phosphate binding site; the sequence is SST. Position 142 (Lys142) interacts with 4-amino-2-methyl-5-(diphosphooxymethyl)pyrimidine. Residue Gly168 coordinates 2-[(2R,5Z)-2-carboxy-4-methylthiazol-5(2H)-ylidene]ethyl phosphate.

Belongs to the thiamine-phosphate synthase family. Requires Mg(2+) as cofactor.

It catalyses the reaction 2-[(2R,5Z)-2-carboxy-4-methylthiazol-5(2H)-ylidene]ethyl phosphate + 4-amino-2-methyl-5-(diphosphooxymethyl)pyrimidine + 2 H(+) = thiamine phosphate + CO2 + diphosphate. The catalysed reaction is 2-(2-carboxy-4-methylthiazol-5-yl)ethyl phosphate + 4-amino-2-methyl-5-(diphosphooxymethyl)pyrimidine + 2 H(+) = thiamine phosphate + CO2 + diphosphate. It carries out the reaction 4-methyl-5-(2-phosphooxyethyl)-thiazole + 4-amino-2-methyl-5-(diphosphooxymethyl)pyrimidine + H(+) = thiamine phosphate + diphosphate. Its pathway is cofactor biosynthesis; thiamine diphosphate biosynthesis; thiamine phosphate from 4-amino-2-methyl-5-diphosphomethylpyrimidine and 4-methyl-5-(2-phosphoethyl)-thiazole: step 1/1. In terms of biological role, condenses 4-methyl-5-(beta-hydroxyethyl)thiazole monophosphate (THZ-P) and 2-methyl-4-amino-5-hydroxymethyl pyrimidine pyrophosphate (HMP-PP) to form thiamine monophosphate (TMP). In Methylobacillus flagellatus (strain ATCC 51484 / DSM 6875 / VKM B-1610 / KT), this protein is Thiamine-phosphate synthase.